The chain runs to 423 residues: Histidine--tRNA ligase (423 aa).

Belongs to the class-II aminoacyl-tRNA synthetase family. Homodimer.

It is found in the cytoplasm. The enzyme catalyses tRNA(His) + L-histidine + ATP = L-histidyl-tRNA(His) + AMP + diphosphate + H(+). The polypeptide is Histidine--tRNA ligase (Moorella thermoacetica (strain ATCC 39073 / JCM 9320)).